Consider the following 271-residue polypeptide: GPN-loop GTPase 3 (271 aa).

Gly-13–Thr-18 contacts GTP. The short motif at Gly-70–Asn-72 is the Gly-Pro-Asn (GPN)-loop; involved in dimer interface element. Ser-173–Asp-176 is a binding site for GTP.

The protein belongs to the GPN-loop GTPase family. Heterodimers with GPN1 or GPN2. Binds to RNA polymerase II (RNAPII).

Its function is as follows. Small GTPase required for proper nuclear import of RNA polymerase II and III (RNAPII and RNAPIII). May act at an RNAP assembly step prior to nuclear import. This Eremothecium gossypii (strain ATCC 10895 / CBS 109.51 / FGSC 9923 / NRRL Y-1056) (Yeast) protein is GPN-loop GTPase 3.